The primary structure comprises 182 residues: UPF0149 protein CGSHiGG_07585 (182 aa).

Belongs to the UPF0149 family.

This Haemophilus influenzae (strain PittGG) protein is UPF0149 protein CGSHiGG_07585.